The sequence spans 184 residues: Large ribosomal subunit protein uL6 (184 aa).

The protein belongs to the universal ribosomal protein uL6 family. As to quaternary structure, part of the 50S ribosomal subunit.

Its function is as follows. This protein binds to the 23S rRNA, and is important in its secondary structure. It is located near the subunit interface in the base of the L7/L12 stalk, and near the tRNA binding site of the peptidyltransferase center. The sequence is that of Large ribosomal subunit protein uL6 from Thermotoga neapolitana (strain ATCC 49049 / DSM 4359 / NBRC 107923 / NS-E).